The following is a 318-amino-acid chain: Methionine import ATP-binding protein MetN (318 aa).

An ABC transporter domain is found at 2-237; sequence IEIKDVGKIF…PEGELKKIIE (236 aa). Residue 34–41 coordinates ATP; sequence GRSGAGKS.

It belongs to the ABC transporter superfamily. Methionine importer (TC 3.A.1.24) family. In terms of assembly, the complex is composed of two ATP-binding proteins (MetN), two transmembrane proteins (MetI) and a solute-binding protein (MetQ).

The protein localises to the cell membrane. It carries out the reaction L-methionine(out) + ATP + H2O = L-methionine(in) + ADP + phosphate + H(+). The catalysed reaction is D-methionine(out) + ATP + H2O = D-methionine(in) + ADP + phosphate + H(+). Its function is as follows. Part of the ABC transporter complex MetNIQ involved in methionine import. Responsible for energy coupling to the transport system. This chain is Methionine import ATP-binding protein MetN, found in Clostridium tetani (strain Massachusetts / E88).